We begin with the raw amino-acid sequence, 64 residues long: Large ribosomal subunit protein bL28 (64 aa).

It belongs to the bacterial ribosomal protein bL28 family.

The chain is Large ribosomal subunit protein bL28 from Campylobacter lari (strain RM2100 / D67 / ATCC BAA-1060).